The chain runs to 255 residues: Diphthine--ammonia ligase (255 aa).

This sequence belongs to the Diphthine--ammonia ligase family.

The enzyme catalyses diphthine-[translation elongation factor 2] + NH4(+) + ATP = diphthamide-[translation elongation factor 2] + AMP + diphosphate + H(+). It functions in the pathway protein modification; peptidyl-diphthamide biosynthesis. Its function is as follows. Amidase that catalyzes the last step of diphthamide biosynthesis using ammonium and ATP. Diphthamide biosynthesis consists in the conversion of an L-histidine residue in the translation elongation factor eEF-2 (EEF2) to diphthamide. The sequence is that of Diphthine--ammonia ligase (dph6) from Danio rerio (Zebrafish).